Consider the following 361-residue polypeptide: Glyceraldehyde-3-phosphate dehydrogenase, glycosomal (361 aa).

Residues 13 to 14, Asp39, Gln92, and Ser135 contribute to the NAD(+) site; that span reads RI. D-glyceraldehyde 3-phosphate-binding positions include 166–168, Thr198, 227–228, and Arg250; these read SCT and TG. Catalysis depends on Cys167, which acts as the Nucleophile. NAD(+) is bound at residue Asn336. Positions 359–361 match the Microbody targeting signal motif; that stretch reads SKM.

The protein belongs to the glyceraldehyde-3-phosphate dehydrogenase family. Homotetramer.

It is found in the glycosome. The catalysed reaction is D-glyceraldehyde 3-phosphate + phosphate + NAD(+) = (2R)-3-phospho-glyceroyl phosphate + NADH + H(+). Its pathway is carbohydrate degradation; glycolysis; pyruvate from D-glyceraldehyde 3-phosphate: step 1/5. The protein is Glyceraldehyde-3-phosphate dehydrogenase, glycosomal (GAPG) of Leishmania mexicana.